We begin with the raw amino-acid sequence, 249 residues long: Phosphate import ATP-binding protein PstB 3 (249 aa).

The ABC transporter domain occupies 4–244 (LVINNLDLYY…PQDERTENYI (241 aa)). ATP is bound at residue 36 to 43 (GPSGCGKS).

The protein belongs to the ABC transporter superfamily. Phosphate importer (TC 3.A.1.7) family. In terms of assembly, the complex is composed of two ATP-binding proteins (PstB), two transmembrane proteins (PstC and PstA) and a solute-binding protein (PstS).

The protein localises to the cell membrane. The catalysed reaction is phosphate(out) + ATP + H2O = ADP + 2 phosphate(in) + H(+). In terms of biological role, part of the ABC transporter complex PstSACB involved in phosphate import. Responsible for energy coupling to the transport system. The chain is Phosphate import ATP-binding protein PstB 3 from Streptococcus agalactiae serotype Ia (strain ATCC 27591 / A909 / CDC SS700).